The chain runs to 215 residues: MNIILMGPPGAGKGTQAELLKARFPIPHISTGDIFRDAVNQGSELGQEAQKYMSSGQLVPDEITTAIVKERITQADCDSGFLLDGFPRTTDQAQALDQSLAELGKKVDLAINIDVPTQLLIERLSGRISCRECKRVYNLNFNPPREQGKCDSCGGELVQRNDDRGETVVKRLEVYNQQTRPLLQYYEAQGVLFNIEGSRGSGQVFADIQEKLESL.

10 to 15 lines the ATP pocket; that stretch reads GAGKGT. The interval 30–59 is NMP; it reads STGDIFRDAVNQGSELGQEAQKYMSSGQLV. Residues Thr-31, Arg-36, 57 to 59, 85 to 88, and Gln-92 each bind AMP; these read QLV and GFPR. Residues 126–163 are LID; that stretch reads GRISCRECKRVYNLNFNPPREQGKCDSCGGELVQRNDD. Arg-127 is a binding site for ATP. Zn(2+) is bound by residues Cys-130 and Cys-133. 136 to 137 contributes to the ATP binding site; sequence VY. Residues Cys-150 and Cys-153 each contribute to the Zn(2+) site. 2 residues coordinate AMP: Arg-160 and Arg-171. An ATP-binding site is contributed by Arg-199.

Belongs to the adenylate kinase family. In terms of assembly, monomer.

It is found in the cytoplasm. It carries out the reaction AMP + ATP = 2 ADP. Its pathway is purine metabolism; AMP biosynthesis via salvage pathway; AMP from ADP: step 1/1. Catalyzes the reversible transfer of the terminal phosphate group between ATP and AMP. Plays an important role in cellular energy homeostasis and in adenine nucleotide metabolism. This is Adenylate kinase from Syntrophomonas wolfei subsp. wolfei (strain DSM 2245B / Goettingen).